A 287-amino-acid chain; its full sequence is Toxin zeta (287 aa).

40 to 47 (GQPGSGKT) serves as a coordination point for ATP. Substrate is bound at residue Asn-66. Catalysis depends on Asp-67, which acts as the Proton acceptor. Substrate is bound by residues Glu-100, Thr-118, Arg-120, and Thr-128. A disordered region spans residues 267 to 287 (KLESLQPPTPPIPKTPKLPGI). Positions 273–287 (PPTPPIPKTPKLPGI) are enriched in pro residues.

This sequence belongs to the zeta toxin family. As to quaternary structure, in the presence of the epsilon antitoxin forms an inactive PezA(2)PezT(2) heterotetramer. The heterotetramer is still able to bind the UNAG substrate.

The catalysed reaction is UDP-N-acetyl-alpha-D-glucosamine + ATP = UDP-N-acetyl-alpha-D-glucosamine 3'-phosphate + ADP + H(+). Toxic component of a type II toxin-antitoxin (TA) system. Phosphorylates UDP-N-acetyl-D-glucosamine (UNAG) on the 3'-hydroxyl group of the N-acetyl-D-glucosamine moiety, yielding UNAG-3P. UNAG-3P inhibits MurA, the first committed step in cell wall synthesis, which is then blocked. Phosphorylation is inhibited by cognate epsilon antitoxin. Part of a postsegregational killing (PSK) system involved in the killing of plasmid-free cells. The zeta toxin induces programmed cell death. This is Toxin zeta from Streptococcus pyogenes.